Consider the following 173-residue polypeptide: Shikimate kinase (173 aa).

Position 16 to 21 (16 to 21 (GSGKTT)) interacts with ATP. Thr20 contributes to the Mg(2+) binding site. Positions 38, 62, and 83 each coordinate substrate. Position 120 (Arg120) interacts with ATP. Substrate is bound at residue Arg139. An ATP-binding site is contributed by Arg156.

It belongs to the shikimate kinase family. In terms of assembly, monomer. Mg(2+) serves as cofactor.

Its subcellular location is the cytoplasm. The enzyme catalyses shikimate + ATP = 3-phosphoshikimate + ADP + H(+). It functions in the pathway metabolic intermediate biosynthesis; chorismate biosynthesis; chorismate from D-erythrose 4-phosphate and phosphoenolpyruvate: step 5/7. In terms of biological role, catalyzes the specific phosphorylation of the 3-hydroxyl group of shikimic acid using ATP as a cosubstrate. This chain is Shikimate kinase, found in Corynebacterium diphtheriae (strain ATCC 700971 / NCTC 13129 / Biotype gravis).